The sequence spans 142 residues: Nucleoside diphosphate kinase (142 aa).

ATP contacts are provided by Lys-11, Phe-59, Arg-87, Thr-93, Arg-104, and Asn-114. His-117 acts as the Pros-phosphohistidine intermediate in catalysis.

The protein belongs to the NDK family. Homotetramer. Requires Mg(2+) as cofactor.

The protein localises to the cytoplasm. It catalyses the reaction a 2'-deoxyribonucleoside 5'-diphosphate + ATP = a 2'-deoxyribonucleoside 5'-triphosphate + ADP. The catalysed reaction is a ribonucleoside 5'-diphosphate + ATP = a ribonucleoside 5'-triphosphate + ADP. In terms of biological role, major role in the synthesis of nucleoside triphosphates other than ATP. The ATP gamma phosphate is transferred to the NDP beta phosphate via a ping-pong mechanism, using a phosphorylated active-site intermediate. The polypeptide is Nucleoside diphosphate kinase (Yersinia pseudotuberculosis serotype I (strain IP32953)).